The following is a 139-amino-acid chain: ATP synthase epsilon chain (139 aa).

Belongs to the ATPase epsilon chain family. In terms of assembly, F-type ATPases have 2 components, CF(1) - the catalytic core - and CF(0) - the membrane proton channel. CF(1) has five subunits: alpha(3), beta(3), gamma(1), delta(1), epsilon(1). CF(0) has three main subunits: a, b and c.

It localises to the cell inner membrane. Functionally, produces ATP from ADP in the presence of a proton gradient across the membrane. This chain is ATP synthase epsilon chain (atpC), found in Escherichia coli O157:H7.